The following is a 499-amino-acid chain: C2H2-type transcription factor RPN4 (499 aa).

Residues 329 to 397 are disordered; the sequence is QTTKKDNSKP…TTKSTHTHSK (69 aa). The segment covering 331-344 has biased composition (basic and acidic residues); it reads TKKDNSKPVEKTVV. Residues 345 to 363 are compositionally biased toward polar residues; sequence EKTSSVTKAGSNHSRSTLA. The C2H2-type zinc-finger motif lies at 405-436; sequence FVCELVNSVTNEVCGAQFSRTYDLTRHQNTIH.

It is found in the nucleus. Functionally, transcription factor that acts as a transcriptional activator of a number of genes encoding proteasomal subunits. Plays a role in ergosterol and plasma membrane homeostasis, and subsequent azole resistance. Regulates the expression of 212 genes, activating 80 genes and repressing, likely in an indirect fashion, 132 genes. Targets comprise several proteasome and ergosterol biosynthesis genes, including ERG1, ERG2, ERG3, and ERG11. Directly regulates ERG11 expression through the 3'-TTGCAAA-5' binding motif. This chain is C2H2-type transcription factor RPN4, found in Candida glabrata (strain ATCC 2001 / BCRC 20586 / JCM 3761 / NBRC 0622 / NRRL Y-65 / CBS 138) (Yeast).